We begin with the raw amino-acid sequence, 78 residues long: DNA import protein CedA1 (78 aa).

2 helical membrane passes run 12–32 (STVT…GWAL) and 53–73 (AIIA…ISYI).

Forms a complex composed of CedA, CedA1 and CedA2.

The protein resides in the cell membrane. Its function is as follows. Part of the Ced system, which is involved in DNA import. In Sulfolobus acidocaldarius (strain ATCC 33909 / DSM 639 / JCM 8929 / NBRC 15157 / NCIMB 11770), this protein is DNA import protein CedA1.